The primary structure comprises 655 residues: MAAGVAAWLPFARAAAIGWMPVANCPMPLAPADKNKRQDELIVLNVSGRRFQTWRTTLERYPDTLLGSTEKEFFFNEDTKEYFFDRDPEVFRCVLNFYRTGKLHYPRYECISAYDDELAFYGILPEIIGDCCYEEYKDRKRENAERLMDDNDSENNQESMPSLSFRQTMWRAFENPHTSTLALVFYYVTGFFIAVSVITNVVETVPCGTVPGSKELPCGERYSVAFFCLDTACVMIFTVEYLLRLFAAPSRYRFIRSVMSIIDVVAIMPYYIGLVMTNNEDVSGAFVTLRVFRVFRIFKFSRHSQGLRILGYTLKSCASELGFLLFSLTMAIIIFATVMFYAEKGSSASKFTSIPASFWYTIVTMTTLGYGDMVPKTIAGKIFGSICSLSGVLVIALPVPVIVSNFSRIYHQNQRADKRRAQKKARLARIRVAKTGSSNAYLHSKRNGLLNEALELTGTPEEEHMGKTTSLIESQHHHLLHCLEKTTGLSYLVDDPLLSVRTSTIKNHEFIDEQMFEQNCMESSMQNYPSTRSPSLSSHPGLTTTCCSRRSKKTTHLPNSNLPATRLRSMQELSTIHIQGSEQPSLTTSRSSLNLKADDGLRPNCKTSQITTAIISIPTPPALTPEGESRPPPASPGPNTNIPSIASNVVKVSAL.

Over 1–182 (MAAGVAAWLP…FENPHTSTLA (182 aa)) the chain is Cytoplasmic. The interval 6 to 21 (AAWLPFARAAAIGWMP) is interaction with KCNIP1 and KCNIP2. An interaction with KCNIP1 region spans residues 70-78 (EKEFFFNED). His-104, Cys-110, Cys-131, and Cys-132 together coordinate Zn(2+). Ser-153 carries the post-translational modification Phosphoserine. Residues 183–204 (LVFYYVTGFFIAVSVITNVVET) traverse the membrane as a helical segment. The Extracellular segment spans residues 205–223 (VPCGTVPGSKELPCGERYS). The chain crosses the membrane as a helical span at residues 224 to 246 (VAFFCLDTACVMIFTVEYLLRLF). Over 247-253 (AAPSRYR) the chain is Cytoplasmic. Residues 254–277 (FIRSVMSIIDVVAIMPYYIGLVMT) traverse the membrane as a helical segment. At 278–283 (NNEDVS) the chain is on the extracellular side. Residues 284–306 (GAFVTLRVFRVFRIFKFSRHSQG) traverse the membrane as a helical; Voltage-sensor segment. The Cytoplasmic segment spans residues 307 to 318 (LRILGYTLKSCA). Residues 319–343 (SELGFLLFSLTMAIIIFATVMFYAE) traverse the membrane as a helical segment. The Extracellular portion of the chain corresponds to 344 to 352 (KGSSASKFT). Residues 353 to 366 (SIPASFWYTIVTMT) constitute an intramembrane region (helical). K(+) contacts are provided by Thr-367, Leu-368, Gly-369, and Tyr-370. The Selectivity filter signature appears at 367–372 (TLGYGD). An intramembrane segment occupies 367–374 (TLGYGDMV). The chain crosses the membrane as a helical span at residues 378–400 (IAGKIFGSICSLSGVLVIALPVP). Over 401–655 (VIVSNFSRIY…ASNVVKVSAL (255 aa)) the chain is Cytoplasmic. Thr-459 carries the post-translational modification Phosphothreonine. The interval 470-487 (SLIESQHHHLLHCLEKTT) is interaction with KCNIP1 and KCNIP2. Positions 472–487 (IESQHHHLLHCLEKTT) are mediates dendritic targeting. The span at 525–548 (MQNYPSTRSPSLSSHPGLTTTCCS) shows a compositional bias: polar residues. The interval 525-565 (MQNYPSTRSPSLSSHPGLTTTCCSRRSKKTTHLPNSNLPAT) is disordered. The residue at position 569 (Ser-569) is a Phosphoserine; by CaMK2D. At Ser-585 the chain carries Phosphoserine. The segment at 615 to 655 (ISIPTPPALTPEGESRPPPASPGPNTNIPSIASNVVKVSAL) is disordered. Residues 637 to 647 (GPNTNIPSIAS) show a composition bias toward polar residues.

The protein belongs to the potassium channel family. D (Shal) (TC 1.A.1.2) subfamily. Kv4.3/KCND3 sub-subfamily. Homotetramer. Heterotetramer with KCND2. Associates with the regulatory subunits KCNIP3 and KCNIP4. Interacts with KCNE1, KCNE2, SCN1B and KCNAB1 and DLG1. Component of heteromultimeric potassium channels. Identified in potassium channel complexes containing KCND1, KCND2, KCND3, KCNIP1, KCNIP2, KCNIP3, KCNIP4, DPP6 and DPP10. Interacts with KCNIP1; each KCNIP1 monomer interacts with two adjacent KCND3 subunits, through both the N-terminal inactivation ball of a KCND3 subunit and a C-terminal helix from the adjacent KCND3 subunit, clamping them together; this interaction stabilizes the tetrameric form and modulates the channel gating kinetics namely channel activation and inactivation kinetics and rate of recovery from inactivation. Interacts with DPP6; this interaction modulates the channel gating kinetics namely channel activation and inactivation kinetics and rate of recovery from inactivation. Interacts with KCNIP2; each KCNIP2 monomer interacts with two adjacent KCND3 subunits, through both the N-terminal inactivation ball of a KCND3 subunit and a C-terminal helix from the adjacent KCND3 subunit, clamping them together; this interaction modulates the channel gating kinetics. In terms of processing, regulated through phosphorylation at Ser-569 by CaMK2D. As to expression, highly expressed in heart and brain, in particular in cortex, cerebellum, amygdala and caudate nucleus. Detected at lower levels in liver, skeletal muscle, kidney and pancreas.

The protein resides in the cell membrane. The protein localises to the sarcolemma. It localises to the cell projection. It is found in the dendrite. The enzyme catalyses K(+)(in) = K(+)(out). In terms of biological role, pore-forming (alpha) subunit of voltage-gated A-type potassium channels that mediates transmembrane potassium transport in excitable membranes, in brain and heart. In cardiomyocytes, may generate the transient outward potassium current I(To). In neurons, may conduct the transient subthreshold somatodendritic A-type potassium current (ISA). Kinetics properties are characterized by fast activation at subthreshold membrane potentials, rapid inactivation, and quick recovery from inactivation. Channel properties are modulated by interactions with regulatory subunits. Interaction with the regulatory subunits KCNIP1 or KCNIP2 modulates the channel gating kinetics namely channel activation and inactivation kinetics and rate of recovery from inactivation. Likewise, interaction with DPP6 modulates the channel gating kinetics namely channel activation and inactivation kinetics. This is A-type voltage-gated potassium channel KCND3 (KCND3) from Homo sapiens (Human).